Consider the following 617-residue polypeptide: Dihydroxy-acid dehydratase (617 aa).

Mg(2+) is bound at residue aspartate 81. Residue cysteine 122 coordinates [2Fe-2S] cluster. Mg(2+) is bound by residues aspartate 123 and lysine 124. Lysine 124 carries the N6-carboxylysine modification. Cysteine 195 is a [2Fe-2S] cluster binding site. Position 492 (glutamate 492) interacts with Mg(2+). Serine 518 (proton acceptor) is an active-site residue.

It belongs to the IlvD/Edd family. Homodimer. The cofactor is [2Fe-2S] cluster. Requires Mg(2+) as cofactor.

It catalyses the reaction (2R)-2,3-dihydroxy-3-methylbutanoate = 3-methyl-2-oxobutanoate + H2O. The catalysed reaction is (2R,3R)-2,3-dihydroxy-3-methylpentanoate = (S)-3-methyl-2-oxopentanoate + H2O. It participates in amino-acid biosynthesis; L-isoleucine biosynthesis; L-isoleucine from 2-oxobutanoate: step 3/4. Its pathway is amino-acid biosynthesis; L-valine biosynthesis; L-valine from pyruvate: step 3/4. Functions in the biosynthesis of branched-chain amino acids. Catalyzes the dehydration of (2R,3R)-2,3-dihydroxy-3-methylpentanoate (2,3-dihydroxy-3-methylvalerate) into 2-oxo-3-methylpentanoate (2-oxo-3-methylvalerate) and of (2R)-2,3-dihydroxy-3-methylbutanoate (2,3-dihydroxyisovalerate) into 2-oxo-3-methylbutanoate (2-oxoisovalerate), the penultimate precursor to L-isoleucine and L-valine, respectively. This Azorhizobium caulinodans (strain ATCC 43989 / DSM 5975 / JCM 20966 / LMG 6465 / NBRC 14845 / NCIMB 13405 / ORS 571) protein is Dihydroxy-acid dehydratase.